A 485-amino-acid polypeptide reads, in one-letter code: Probable glycine dehydrogenase (decarboxylating) subunit 2 (485 aa).

Position 273 is an N6-(pyridoxal phosphate)lysine (K273).

This sequence belongs to the GcvP family. C-terminal subunit subfamily. In terms of assembly, the glycine cleavage system is composed of four proteins: P, T, L and H. In this organism, the P 'protein' is a heterodimer of two subunits. Requires pyridoxal 5'-phosphate as cofactor.

The enzyme catalyses N(6)-[(R)-lipoyl]-L-lysyl-[glycine-cleavage complex H protein] + glycine + H(+) = N(6)-[(R)-S(8)-aminomethyldihydrolipoyl]-L-lysyl-[glycine-cleavage complex H protein] + CO2. Functionally, the glycine cleavage system catalyzes the degradation of glycine. The P protein binds the alpha-amino group of glycine through its pyridoxal phosphate cofactor; CO(2) is released and the remaining methylamine moiety is then transferred to the lipoamide cofactor of the H protein. This Caldanaerobacter subterraneus subsp. tengcongensis (strain DSM 15242 / JCM 11007 / NBRC 100824 / MB4) (Thermoanaerobacter tengcongensis) protein is Probable glycine dehydrogenase (decarboxylating) subunit 2.